We begin with the raw amino-acid sequence, 1040 residues long: ATPase family AAA domain-containing protein 2 (1040 aa).

Residues 1–11 show a composition bias toward basic residues; that stretch reads MSLLKMRRHAI. Residues 1 to 30 form a disordered region; that stretch reads MSLLKMRRHAIHSSDSTSSSSSEDDCFERR. Ser-65 is subject to Phosphoserine. An ATP-binding site is contributed by 122-129; sequence GPPGTGKT. Phosphoserine is present on residues Ser-401 and Ser-406. 2 coiled-coil regions span residues 619 to 643 and 735 to 761; these read LTAE…IFLR and YAII…KKRG. Residues 629–741 form the Bromo domain; that stretch reads EQEEDTFREL…DTAYAIIKEE (113 aa). Residues 772-799 form a disordered region; it reads YHVMPKQNSPPVGDKKPDQEQNEKLKVP. Glycyl lysine isopeptide (Lys-Gly) (interchain with G-Cter in SUMO2) cross-links involve residues Lys-777 and Lys-797. Residues 784-797 show a composition bias toward basic and acidic residues; that stretch reads GDKKPDQEQNEKLK. Phosphothreonine is present on residues Thr-801 and Thr-825. A compositionally biased stretch (basic residues) spans 811–833; it reads LKRKFHKKSKWHVGTKIKRRKIS. Residues 811–935 are disordered; the sequence is LKRKFHKKSK…SQVTDIPEDS (125 aa). Residues 835-848 show a composition bias toward polar residues; the sequence is AKDNSLNAMNSSSR. 3 positions are modified to phosphoserine: Ser-849, Ser-883, and Ser-891. Basic and acidic residues-rich tracts occupy residues 849–863 and 874–885; these read SDTE…EHTE and ESDKQNRLESNI. Over residues 901-919 the composition is skewed to basic and acidic residues; that stretch reads EEPKETTEGTELRKDRIVC. A Phosphoserine modification is found at Ser-951. At Thr-972 the chain carries Phosphothreonine.

The protein belongs to the AAA ATPase family. In terms of assembly, interacts with ESR1 and NCOA3 and these interactions are enhanced by estradiol. Interacts with acetylated lysine residues on histone H1.4, H2A, H2B and H3 (in vitro).

Its subcellular location is the nucleus. It catalyses the reaction ATP + H2O = ADP + phosphate + H(+). Its function is as follows. May be a transcriptional coactivator of the nuclear receptor ESR1 required to induce the expression of a subset of estradiol target genes, such as CCND1, MYC and E2F1. May play a role in the recruitment or occupancy of CREBBP at some ESR1 target gene promoters. May be required for histone hyperacetylation. This chain is ATPase family AAA domain-containing protein 2 (Atad2), found in Mus musculus (Mouse).